The sequence spans 519 residues: uncharacterized protein (519 aa).

A run of 4 helical transmembrane segments spans residues 141 to 161 (GSSL…ANVF), 202 to 222 (LGET…WALA), 385 to 405 (FVVR…PFVG), and 433 to 453 (TVVP…AELV).

It is found in the cell membrane. This is an uncharacterized protein from Sinorhizobium fredii (strain NBRC 101917 / NGR234).